A 447-amino-acid polypeptide reads, in one-letter code: Phosphoglucosamine mutase (447 aa).

The active-site Phosphoserine intermediate is serine 102. 4 residues coordinate Mg(2+): serine 102, aspartate 241, aspartate 243, and aspartate 245. Serine 102 carries the phosphoserine modification.

This sequence belongs to the phosphohexose mutase family. Mg(2+) serves as cofactor. Post-translationally, activated by phosphorylation.

The catalysed reaction is alpha-D-glucosamine 1-phosphate = D-glucosamine 6-phosphate. In terms of biological role, catalyzes the conversion of glucosamine-6-phosphate to glucosamine-1-phosphate. This is Phosphoglucosamine mutase from Ruegeria sp. (strain TM1040) (Silicibacter sp.).